Here is a 1588-residue protein sequence, read N- to C-terminus: MVQLAKVPILGNDIIHVGYNIHDHLVETIIKHCPSSTYVICNDTNLSKVPYYQQLVLEFKASLPEGSRLLTYVVKPGETSKSRETKAQLEDYLLVEGCTRDTVMVAIGGGVIGDMIGFVASTFMRGVRVVQVPTSLLAMVDSSIGGKTAIDTPLGKNFIGAFWQPKFVLVDIKWLETLAKREFINGMAEVIKTACIWNADEFTRLESNASLFLNVVNGEKNVKVTNQLTNEIDEISNTDIEAMLDHTYKLVLESIKVKAEVVSSDERESSLRNLLNFGHSIGHAYEAILTPQALHGECVSIGMVKEAELSRYFGILSPTQVARLSKILVAYGLPVSPDEKWFKELTLHKKTPLDILLKKMSIDKKNEGSKKKVVILESIGKCYGDSAQFVSDEDLRFILTDETLVYPFKDIPADQQKVVIPPGSKSISNRALILAALGEGQCKIKNLLHSDDTKHMLTAVHELKGATISWEDNGETVVVEGHGGSTLSACADPLYLGNAGTASRFLTSLAALVNSTPSQKYIVLTGNARMQQRPIAPLVDSLRANGTKIEYLNNEGSLPIKVYTDSVFKGGRIELAATVSSQYVSSILMCAPYAEEPVTLALVGGKPISKLYVDMTIKMMEKFGINVETSTTEPYTYYIPKGHYINPSEYVIESDASSATYPLAFAAMTGTTVTVPNIGFESLQGDARFARDVLKPMGCKITQTATSTTVSGPPVGTLKPLKHVDMEPMTDAFLTACVVAAISHDSDPNSANTTTIEGIANQRVKECNRILAMATELAKFGVKTTELPDGIQVHGLNSIKDLKVPSDSSGPVGVCTYDDHRVAMSFSLLAGMVNSQNERDEVANPVRILERHCTGKTWPGWWDVLHSELGAKLDGAEPLECTSKKNSKKSVVIIGMRAAGKTTISKWCASALGYKLVDLDELFEQQHNNQSVKQFVVENGWEKFREEETRIFKEVIQNYGDDGYVFSTGGGIVESAESRKALKDFASSGGYVLHLHRDIEETIVFLQSDPSRPAYVEEIREVWNRREGWYKECSNFSFFAPHCSAEAEFQALRRSFSKYIATITGVREIEIPSGRSAFVCLTFDDLTEQTENLTPICYGCEAVEVRVDHLANYSADFVSKQLSILRKATDSIPIIFTVRTMKQGGNFLDEEFKTLRELYDIALKNGVEFLDLELTLPTDIQYEVINKRGNTKIIGSHHDFQGLYSWDDAEWENRFNQALTLDVDVVKFVGTAVNFEDNLRLEHFRDTHKNKPLIAVNMTSKGSISRVLNNVLTPVTSDLLPNSAAPGQLTVAQINKMYTSMGGIEPKELFVVGKPIGHSRSPILHNTGYEILGLPHKFDKFETGSAQLVKEKLLDGNKNFGGAAVTIPLKLDIMQYMDELTDAAKVIGAVNTVIPLGNKKFKGDNTDWLGIRNALINNGVPEYVGHTAGLVIGAGGTSRAALYALHSLGCKKIFIINRTTSKLKPLIESLPSEFNIIGIESTKSIEEIKEHVGVAVSCVPADKPLDDELLSKLERFLVKGAHAAFVPTLLEAAYKPSVTPVMTISQDKYQWHVVPGSQMLVHQGVAQFEKWTGFKGPFKAIFDAVTKE.

Residues 1-392 (MVQLAKVPIL…YGDSAQFVSD (392 aa)) form a 3-dehydroquinate synthase region. NAD(+)-binding positions include 43–45 (DTN), 78–81 (ETSK), 109–111 (GGV), and Asp-114. 7-phospho-2-dehydro-3-deoxy-D-arabino-heptonate is bound at residue Arg-125. Residue 134–135 (TS) coordinates NAD(+). 7-phospho-2-dehydro-3-deoxy-D-arabino-heptonate contacts are provided by Asp-141 and Lys-147. Lys-156 serves as a coordination point for NAD(+). Asn-157 serves as a coordination point for 7-phospho-2-dehydro-3-deoxy-D-arabino-heptonate. NAD(+) contacts are provided by residues 174 to 177 (WLET) and Asn-185. Zn(2+) is bound at residue Glu-189. Residues 189–192 (EVIK) and Lys-258 contribute to the 7-phospho-2-dehydro-3-deoxy-D-arabino-heptonate site. Glu-268 (proton acceptor; for 3-dehydroquinate synthase activity) is an active-site residue. Residues 272-276 (RNLLN) and His-279 contribute to the 7-phospho-2-dehydro-3-deoxy-D-arabino-heptonate site. Residue His-279 coordinates Zn(2+). His-283 serves as the catalytic Proton acceptor; for 3-dehydroquinate synthase activity. 7-phospho-2-dehydro-3-deoxy-D-arabino-heptonate is bound by residues His-295 and Lys-364. His-295 serves as a coordination point for Zn(2+). Residues 405 to 871 (VYPFKDIPAD…WDVLHSELGA (467 aa)) are EPSP synthase. Residue Cys-853 is the For EPSP synthase activity of the active site. The interval 890–1080 (SVVIIGMRAA…IPSGRSAFVC (191 aa)) is shikimate kinase. 895–902 (GMRAAGKT) is an ATP binding site. The interval 1081–1293 (LTFDDLTEQT…AAPGQLTVAQ (213 aa)) is 3-dehydroquinase. His-1198 acts as the Proton acceptor; for 3-dehydroquinate dehydratase activity in catalysis. Lys-1227 serves as the catalytic Schiff-base intermediate with substrate; for 3-dehydroquinate dehydratase activity. A shikimate dehydrogenase region spans residues 1306–1588 (PKELFVVGKP…KAIFDAVTKE (283 aa)).

The protein in the N-terminal section; belongs to the sugar phosphate cyclases superfamily. Dehydroquinate synthase family. It in the 2nd section; belongs to the EPSP synthase family. This sequence in the 3rd section; belongs to the shikimate kinase family. In the 4th section; belongs to the type-I 3-dehydroquinase family. The protein in the C-terminal section; belongs to the shikimate dehydrogenase family. In terms of assembly, homodimer. The cofactor is Zn(2+).

It is found in the cytoplasm. It catalyses the reaction 7-phospho-2-dehydro-3-deoxy-D-arabino-heptonate = 3-dehydroquinate + phosphate. The enzyme catalyses 3-dehydroquinate = 3-dehydroshikimate + H2O. It carries out the reaction shikimate + NADP(+) = 3-dehydroshikimate + NADPH + H(+). The catalysed reaction is shikimate + ATP = 3-phosphoshikimate + ADP + H(+). It catalyses the reaction 3-phosphoshikimate + phosphoenolpyruvate = 5-O-(1-carboxyvinyl)-3-phosphoshikimate + phosphate. It functions in the pathway metabolic intermediate biosynthesis; chorismate biosynthesis; chorismate from D-erythrose 4-phosphate and phosphoenolpyruvate: step 2/7. The protein operates within metabolic intermediate biosynthesis; chorismate biosynthesis; chorismate from D-erythrose 4-phosphate and phosphoenolpyruvate: step 3/7. It participates in metabolic intermediate biosynthesis; chorismate biosynthesis; chorismate from D-erythrose 4-phosphate and phosphoenolpyruvate: step 4/7. Its pathway is metabolic intermediate biosynthesis; chorismate biosynthesis; chorismate from D-erythrose 4-phosphate and phosphoenolpyruvate: step 5/7. It functions in the pathway metabolic intermediate biosynthesis; chorismate biosynthesis; chorismate from D-erythrose 4-phosphate and phosphoenolpyruvate: step 6/7. The AROM polypeptide catalyzes 5 consecutive enzymatic reactions in prechorismate polyaromatic amino acid biosynthesis. The protein is Pentafunctional AROM polypeptide of Saccharomyces cerevisiae (strain RM11-1a) (Baker's yeast).